The primary structure comprises 134 residues: Small ribosomal subunit protein uS11 (134 aa).

The tract at residues 114-134 is disordered; it reads TPVPHNGTRPPRKWFKRQEKR. Residues 123 to 134 are compositionally biased toward basic residues; it reads PPRKWFKRQEKR.

This sequence belongs to the universal ribosomal protein uS11 family. Part of the 30S ribosomal subunit. Interacts with proteins S7 and S18. Binds to IF-3.

Its function is as follows. Located on the platform of the 30S subunit, it bridges several disparate RNA helices of the 16S rRNA. Forms part of the Shine-Dalgarno cleft in the 70S ribosome. This chain is Small ribosomal subunit protein uS11, found in Mesomycoplasma hyopneumoniae (strain 232) (Mycoplasma hyopneumoniae).